A 450-amino-acid chain; its full sequence is tRNA-2-methylthio-N(6)-dimethylallyladenosine synthase (450 aa).

Residues 14 to 132 enclose the MTTase N-terminal domain; it reads GEFFIETWGC…FPNYLNEVKK (119 aa). [4Fe-4S] cluster is bound by residues Cys-23, Cys-59, Cys-93, Cys-169, Cys-173, and Cys-176. The Radical SAM core domain occupies 155-385; the sequence is RKNSMKAFVT…VEVVNEISAK (231 aa). Positions 388–450 constitute a TRAM domain; the sequence is KAYEGKIEEV…NSFSLTGEEI (63 aa).

Belongs to the methylthiotransferase family. MiaB subfamily. In terms of assembly, monomer. The cofactor is [4Fe-4S] cluster.

It is found in the cytoplasm. It carries out the reaction N(6)-dimethylallyladenosine(37) in tRNA + (sulfur carrier)-SH + AH2 + 2 S-adenosyl-L-methionine = 2-methylsulfanyl-N(6)-dimethylallyladenosine(37) in tRNA + (sulfur carrier)-H + 5'-deoxyadenosine + L-methionine + A + S-adenosyl-L-homocysteine + 2 H(+). Its function is as follows. Catalyzes the methylthiolation of N6-(dimethylallyl)adenosine (i(6)A), leading to the formation of 2-methylthio-N6-(dimethylallyl)adenosine (ms(2)i(6)A) at position 37 in tRNAs that read codons beginning with uridine. The sequence is that of tRNA-2-methylthio-N(6)-dimethylallyladenosine synthase from Clostridium botulinum (strain Okra / Type B1).